A 321-amino-acid polypeptide reads, in one-letter code: NADH-ubiquinone oxidoreductase chain 1 (321 aa).

8 consecutive transmembrane segments (helical) span residues 9–29 (ITNSLLYILSILIAVAFLTLL), 75–95 (ILFTLSPIMALILALTSWAPM), 106–126 (LGLLFIMAMSGMFTYAILWSG), 151–171 (TLGLIIISMAILSGGYSLMLF), 177–197 (HMWLLLSSWPLAMMWFTSTLA), 219–239 (VEFSAGPFALLFLAEYTNILF), 256–276 (PQLFTINLMTKTMILTTLFLW), and 297–317 (YLPLTLAMYLLNTSTSMALCG).

The protein belongs to the complex I subunit 1 family.

The protein localises to the mitochondrion inner membrane. The enzyme catalyses a ubiquinone + NADH + 5 H(+)(in) = a ubiquinol + NAD(+) + 4 H(+)(out). Core subunit of the mitochondrial membrane respiratory chain NADH dehydrogenase (Complex I) that is believed to belong to the minimal assembly required for catalysis. Complex I functions in the transfer of electrons from NADH to the respiratory chain. The immediate electron acceptor for the enzyme is believed to be ubiquinone. This chain is NADH-ubiquinone oxidoreductase chain 1 (MT-ND1), found in Lycodon semicarinatus (Ryukyu odd-tooth snake).